A 480-amino-acid polypeptide reads, in one-letter code: Cobyric acid synthase (480 aa).

Residues 249-436 (KLKVVVPVLT…LHGFLDSEAA (188 aa)) enclose the GATase cobBQ-type domain. The active-site Nucleophile is Cys-330. The active site involves His-428.

The protein belongs to the CobB/CobQ family. CobQ subfamily.

It participates in cofactor biosynthesis; adenosylcobalamin biosynthesis. In terms of biological role, catalyzes amidations at positions B, D, E, and G on adenosylcobyrinic A,C-diamide. NH(2) groups are provided by glutamine, and one molecule of ATP is hydrogenolyzed for each amidation. In Vibrio vulnificus (strain YJ016), this protein is Cobyric acid synthase.